Reading from the N-terminus, the 133-residue chain is Peptide methionine sulfoxide reductase MsrB (133 aa).

Residues 1-12 show a composition bias toward basic and acidic residues; the sequence is MSEKVQKSEHEW. The tract at residues 1 to 36 is disordered; sequence MSEKVQKSEHEWQQQLTPEQYRVTREKGTERPFTGD. The MsrB domain maps to 9 to 132; the sequence is EHEWQQQLTP…NSVSLDFHPG (124 aa). Zn(2+) is bound by residues Cys48, Cys51, Cys97, and Cys100. The active-site Nucleophile is Cys121.

This sequence belongs to the MsrB Met sulfoxide reductase family. The cofactor is Zn(2+).

It catalyses the reaction L-methionyl-[protein] + [thioredoxin]-disulfide + H2O = L-methionyl-(R)-S-oxide-[protein] + [thioredoxin]-dithiol. In Chromohalobacter salexigens (strain ATCC BAA-138 / DSM 3043 / CIP 106854 / NCIMB 13768 / 1H11), this protein is Peptide methionine sulfoxide reductase MsrB.